The primary structure comprises 297 residues: Small ribosomal subunit protein uS2 (297 aa).

Positions 276-297 (DWASSAPAEGWAGEAPATEAKW) are disordered.

The protein belongs to the universal ribosomal protein uS2 family. Component of the small ribosomal subunit. Mature ribosomes consist of a small (40S) and a large (60S) subunit. The 40S subunit contains about 33 different proteins and 1 molecule of RNA (18S). The 60S subunit contains about 49 different proteins and 3 molecules of RNA (25S, 5.8S and 5S). Interacts with RPS21.

The protein resides in the cytoplasm. In terms of biological role, required for the assembly and/or stability of the 40S ribosomal subunit. Required for the processing of the 20S rRNA-precursor to mature 18S rRNA in a late step of the maturation of 40S ribosomal subunits. This is Small ribosomal subunit protein uS2 from Uncinocarpus reesii (strain UAMH 1704).